Here is an 81-residue protein sequence, read N- to C-terminus: Translational regulator CsrA (81 aa).

This sequence belongs to the CsrA/RsmA family. Homodimer; the beta-strands of each monomer intercalate to form a hydrophobic core, while the alpha-helices form wings that extend away from the core.

The protein resides in the cytoplasm. A translational regulator that binds mRNA to regulate translation initiation and/or mRNA stability. Usually binds in the 5'-UTR at or near the Shine-Dalgarno sequence preventing ribosome-binding, thus repressing translation. Its main target seems to be the major flagellin gene, while its function is anatagonized by FliW. This chain is Translational regulator CsrA, found in Desulforapulum autotrophicum (strain ATCC 43914 / DSM 3382 / VKM B-1955 / HRM2) (Desulfobacterium autotrophicum).